The primary structure comprises 126 residues: H2B.U histone 2 (126 aa).

The disordered stretch occupies residues 1-35; it reads MPEPSRSTPAPKKGSKKAITKAQKKDGKKRKRGRK. An N-acetylproline modification is found at Pro-2. Glu-3 carries the post-translational modification ADP-ribosyl glutamic acid. ADP-ribosylserine is present on Ser-7. N6-(beta-hydroxybutyryl)lysine; alternate is present on Lys-12. N6-acetyllysine; alternate is present on residues Lys-12 and Lys-13. N6-crotonyllysine; alternate is present on residues Lys-12 and Lys-13. An N6-lactoyllysine; alternate modification is found at Lys-12. Position 13 is an N6-(2-hydroxyisobutyryl)lysine; alternate (Lys-13). Ser-15 carries the post-translational modification Phosphoserine; by STK4/MST1. Residues Lys-16, Lys-17, Lys-21, and Lys-24 each carry the N6-acetyllysine; alternate modification. N6-crotonyllysine; alternate is present on residues Lys-16, Lys-17, Lys-21, and Lys-24. An N6-lactoyllysine; alternate mark is found at Lys-16, Lys-17, Lys-21, and Lys-24. Lys-17 bears the N6-glutaryllysine; alternate mark. N6-(beta-hydroxybutyryl)lysine; alternate is present on Lys-21. An N6-(2-hydroxyisobutyryl)lysine; alternate mark is found at Lys-21 and Lys-24. Position 21 is an N6-butyryllysine; alternate (Lys-21). Lys-21 is covalently cross-linked (Glycyl lysine isopeptide (Lys-Gly) (interchain with G-Cter in SUMO2); alternate). Lys-25 bears the N6-(2-hydroxyisobutyryl)lysine mark. Position 35 is an N6-(beta-hydroxybutyryl)lysine; alternate (Lys-35). Lys-35 carries the post-translational modification N6-crotonyllysine; alternate. An N6-(2-hydroxyisobutyryl)lysine; alternate modification is found at Lys-35. Lys-35 is modified (N6-glutaryllysine; alternate). Lys-35 is subject to N6-succinyllysine; alternate. A Glycyl lysine isopeptide (Lys-Gly) (interchain with G-Cter in ubiquitin); alternate cross-link involves residue Lys-35. At Glu-36 the chain carries PolyADP-ribosyl glutamic acid. At Ser-37 the chain carries Phosphoserine; by AMPK. Lys-44 is modified (N6-lactoyllysine; alternate). Lys-44, Lys-47, and Lys-58 each carry N6-(2-hydroxyisobutyryl)lysine; alternate. 2 positions are modified to N6-glutaryllysine; alternate: Lys-44 and Lys-47. Lys-47 is subject to N6-methyllysine; alternate. N6,N6-dimethyllysine; alternate is present on Lys-58. Residue Arg-80 is modified to Dimethylated arginine. Position 86 is an N6-acetyllysine; alternate (Lys-86). Lys-86 carries the post-translational modification N6-lactoyllysine; alternate. At Lys-86 the chain carries N6-(2-hydroxyisobutyryl)lysine; alternate. At Lys-86 the chain carries N6,N6,N6-trimethyllysine; alternate. Omega-N-methylarginine is present on residues Arg-87 and Arg-93. Lys-109 is modified (N6-(beta-hydroxybutyryl)lysine; alternate). Position 109 is an N6-lactoyllysine; alternate (Lys-109). Lys-109 is modified (N6-(2-hydroxyisobutyryl)lysine; alternate). Lys-109 carries the N6-glutaryllysine; alternate modification. Residue Lys-109 is modified to N6-methyllysine; alternate. The O-linked (GlcNAc) serine glycan is linked to Ser-113. Thr-116 carries the phosphothreonine modification. Lys-117 is subject to N6-(beta-hydroxybutyryl)lysine; alternate. An N6-lactoyllysine; alternate mark is found at Lys-117 and Lys-121. N6-(2-hydroxyisobutyryl)lysine; alternate is present on residues Lys-117 and Lys-121. Lys-117 and Lys-121 each carry N6-glutaryllysine; alternate. An N6-succinyllysine; alternate mark is found at Lys-117 and Lys-121. Lys-117 is subject to N6-methylated lysine; alternate. Lys-121 is covalently cross-linked (Glycyl lysine isopeptide (Lys-Gly) (interchain with G-Cter in ubiquitin); alternate).

The protein belongs to the histone H2B family. The nucleosome is a histone octamer containing two molecules each of H2A, H2B, H3 and H4 assembled in one H3-H4 heterotetramer and two H2A-H2B heterodimers. The octamer wraps approximately 147 bp of DNA. In terms of processing, monoubiquitination at Lys-35 (H2BK34Ub) by the MSL1/MSL2 dimer is required for histone H3 'Lys-4' (H3K4me) and 'Lys-79' (H3K79me) methylation and transcription activation at specific gene loci, such as HOXA9 and MEIS1 loci. Similarly, monoubiquitination at Lys-121 (H2BK120Ub) by the RNF20/40 complex gives a specific tag for epigenetic transcriptional activation and is also prerequisite for histone H3 'Lys-4' and 'Lys-79' methylation. It also functions cooperatively with the FACT dimer to stimulate elongation by RNA polymerase II. H2BK120Ub also acts as a regulator of mRNA splicing: deubiquitination by USP49 is required for efficient cotranscriptional splicing of a large set of exons. Phosphorylated on Ser-15 (H2BS14ph) by STK4/MST1 during apoptosis; which facilitates apoptotic chromatin condensation. Also phosphorylated on Ser-15 in response to DNA double strand breaks (DSBs), and in correlation with somatic hypermutation and immunoglobulin class-switch recombination. Phosphorylation at Ser-37 (H2BS36ph) by AMPK in response to stress promotes transcription. Post-translationally, glcNAcylation at Ser-113 promotes monoubiquitination of Lys-121. It fluctuates in response to extracellular glucose, and associates with transcribed genes. In terms of processing, ADP-ribosylated by PARP1 or PARP2 on Ser-7 (H2BS6ADPr) in response to DNA damage. H2BS6ADPr promotes recruitment of CHD1L. Mono-ADP-ribosylated on Glu-3 (H2BE2ADPr) by PARP3 in response to single-strand breaks. Poly ADP-ribosylation on Glu-36 (H2BE35ADPr) by PARP1 regulates adipogenesis: it inhibits phosphorylation at Ser-37 (H2BS36ph), thereby blocking expression of pro-adipogenetic genes. Crotonylation (Kcr) is specifically present in male germ cells and marks testis-specific genes in post-meiotic cells, including X-linked genes that escape sex chromosome inactivation in haploid cells. Crotonylation marks active promoters and enhancers and confers resistance to transcriptional repressors. It is also associated with post-meiotically activated genes on autosomes. Post-translationally, hydroxybutyrylation of histones is induced by starvation. In terms of processing, lactylated in macrophages by EP300/P300 by using lactoyl-CoA directly derived from endogenous or exogenous lactate, leading to stimulates gene transcription.

The protein localises to the nucleus. It localises to the chromosome. Functionally, core component of nucleosome. Nucleosomes wrap and compact DNA into chromatin, limiting DNA accessibility to the cellular machineries which require DNA as a template. Histones thereby play a central role in transcription regulation, DNA repair, DNA replication and chromosomal stability. DNA accessibility is regulated via a complex set of post-translational modifications of histones, also called histone code, and nucleosome remodeling. The protein is H2B.U histone 2 of Mus musculus (Mouse).